A 224-amino-acid polypeptide reads, in one-letter code: Large ribosomal subunit protein uL3 (224 aa).

Position 159 is an N5-methylglutamine (Gln-159).

It belongs to the universal ribosomal protein uL3 family. In terms of assembly, part of the 50S ribosomal subunit. Forms a cluster with proteins L14 and L19. In terms of processing, methylated by PrmB.

Functionally, one of the primary rRNA binding proteins, it binds directly near the 3'-end of the 23S rRNA, where it nucleates assembly of the 50S subunit. This chain is Large ribosomal subunit protein uL3, found in Janthinobacterium sp. (strain Marseille) (Minibacterium massiliensis).